A 425-amino-acid chain; its full sequence is 5-nitroanthranilic acid aminohydrolase (425 aa).

Asp-88 is a catalytic residue. Glu-158 (proton acceptor) is an active-site residue.

Belongs to the peptidase M20A family. Requires Co(2+) as cofactor. It depends on Mn(2+) as a cofactor. Zn(2+) serves as cofactor. The cofactor is Fe(2+). Ni(2+) is required as a cofactor.

The catalysed reaction is 5-nitroanthranilate + H2O + H(+) = 5-nitrosalicylate + NH4(+). In terms of biological role, catalyzes the deamination of 5-nitroanthranilate (5NAA) to 5-nitrosalicylate (5NSA), the first step in biodegradation of 5-nitroanthranilate. The polypeptide is 5-nitroanthranilic acid aminohydrolase (naaA) (Bradyrhizobium sp).